We begin with the raw amino-acid sequence, 326 residues long: MQITVREALRDAMQEEMIRDDKVFVIGEEVAEYQGAYKVTQGLLEQFGPKRVIDTPITEYGFAGLAVGAAFAGLRPIVEFMTFNFAMQAFDHIVNSAAKTHYMSGGQVKCPIVFRGPNGAASRVAAQHSQNYTACYSHIPGLKVVAPYSAEDHKGLMLTAIRDDNPVVFLENEILYGHSFDVPKTIEPIPFGQAKILREGSSVTIVTFSIQVKLALDAANFVQNDNIDCEVIDLRTIKPLDTETIIESVKKTNRLVVVEEGWFFAGVGASIASIVMKEAFDYLDAPIEIVSGKDLPLPYAVNLETLALPSESDVIEAVKKVCYYSI.

Position 59 (glutamate 59) interacts with thiamine diphosphate.

As to quaternary structure, heterodimer of an alpha and a beta chain. Requires thiamine diphosphate as cofactor.

It catalyses the reaction N(6)-[(R)-lipoyl]-L-lysyl-[protein] + pyruvate + H(+) = N(6)-[(R)-S(8)-acetyldihydrolipoyl]-L-lysyl-[protein] + CO2. In terms of biological role, the pyruvate dehydrogenase complex catalyzes the overall conversion of pyruvate to acetyl-CoA and CO(2). It contains multiple copies of three enzymatic components: pyruvate dehydrogenase (E1), dihydrolipoamide acetyltransferase (E2) and lipoamide dehydrogenase (E3). In Rickettsia conorii (strain ATCC VR-613 / Malish 7), this protein is Pyruvate dehydrogenase E1 component subunit beta (pdhB).